The sequence spans 37 residues: Large ribosomal subunit protein bL36 (37 aa).

Belongs to the bacterial ribosomal protein bL36 family.

This chain is Large ribosomal subunit protein bL36, found in Alkalilimnicola ehrlichii (strain ATCC BAA-1101 / DSM 17681 / MLHE-1).